A 460-amino-acid polypeptide reads, in one-letter code: Amino acid transporter AVT6A (460 aa).

Helical transmembrane passes span 45–65 (FSGA…MALP), 66–86 (ATMK…MAFL), 120–140 (ILLQ…YMII), 172–192 (AAIL…FKRI), 199–219 (SALS…ISIM), 238–258 (LTSF…FICH), 281–301 (ALML…LLFG), 336–356 (LMLV…GLLF), 371–391 (CLTA…PSIW), 394–414 (FQFT…ASII), and 427–447 (TTLA…AIYS).

Belongs to the amino acid/polyamine transporter 2 family. Amino acid/auxin permease (AAAP) (TC 2.A.18.6) subfamily.

The protein resides in the membrane. This chain is Amino acid transporter AVT6A, found in Arabidopsis thaliana (Mouse-ear cress).